The following is a 273-amino-acid chain: ATP synthase F(1) complex subunit gamma, mitochondrial (273 aa).

Lys14 is modified (N6-acetyllysine). Lys24 bears the N6-succinyllysine mark. Lys30 carries the N6-acetyllysine modification. Lys90 is subject to N6-acetyllysine; alternate. Lys90 carries the post-translational modification N6-succinyllysine; alternate. Lys113 carries the post-translational modification N6-acetyllysine. Ser121 is modified (phosphoserine). Lys129 carries the N6-acetyllysine; alternate modification. An N6-succinyllysine; alternate modification is found at Lys129. Lys172 is modified (N6-acetyllysine). At Lys245 the chain carries N6-succinyllysine.

Belongs to the ATPase gamma chain family. As to quaternary structure, component of the ATP synthase complex composed at least of ATP5F1A/subunit alpha, ATP5F1B/subunit beta, ATP5MC1/subunit c (homooctomer), MT-ATP6/subunit a, MT-ATP8/subunit 8, ATP5ME/subunit e, ATP5MF/subunit f, ATP5MG/subunit g, ATP5MK/subunit k, ATP5MJ/subunit j, ATP5F1C/subunit gamma, ATP5F1D/subunit delta, ATP5F1E/subunit epsilon, ATP5PF/subunit F6, ATP5PB/subunit b, ATP5PD/subunit d, ATP5PO/subunit OSCP. ATP synthase complex consists of a soluble F(1) head domain (subunits alpha(3) and beta(3)) - the catalytic core - and a membrane F(0) domain - the membrane proton channel (subunits c, a, 8, e, f, g, k and j). These two domains are linked by a central stalk (subunits gamma, delta, and epsilon) rotating inside the F1 region and a stationary peripheral stalk (subunits F6, b, d, and OSCP). Interacts with FLVCR2; this interaction occurs in the absence of heme and is disrupted upon heme binding.

The protein resides in the mitochondrion inner membrane. In terms of biological role, subunit gamma, of the mitochondrial membrane ATP synthase complex (F(1)F(0) ATP synthase or Complex V) that produces ATP from ADP in the presence of a proton gradient across the membrane which is generated by electron transport complexes of the respiratory chain. ATP synthase complex consist of a soluble F(1) head domain - the catalytic core - and a membrane F(1) domain - the membrane proton channel. These two domains are linked by a central stalk rotating inside the F(1) region and a stationary peripheral stalk. During catalysis, ATP synthesis in the catalytic domain of F(1) is coupled via a rotary mechanism of the central stalk subunits to proton translocation. In vivo, can only synthesize ATP although its ATP hydrolase activity can be activated artificially in vitro. With the central stalk subunit delta, is essential for the biogenesis of F(1) catalytic part of the ATP synthase complex namely in the formation of F1 assembly intermediate. The polypeptide is ATP synthase F(1) complex subunit gamma, mitochondrial (Rattus norvegicus (Rat)).